Consider the following 283-residue polypeptide: 4-diphosphocytidyl-2-C-methyl-D-erythritol kinase (283 aa).

The active site involves K10. 99–109 (PMGGGLGGGSS) contacts ATP. The active site involves D141.

Belongs to the GHMP kinase family. IspE subfamily. In terms of assembly, homodimer.

The enzyme catalyses 4-CDP-2-C-methyl-D-erythritol + ATP = 4-CDP-2-C-methyl-D-erythritol 2-phosphate + ADP + H(+). The protein operates within isoprenoid biosynthesis; isopentenyl diphosphate biosynthesis via DXP pathway; isopentenyl diphosphate from 1-deoxy-D-xylulose 5-phosphate: step 3/6. Functionally, catalyzes the phosphorylation of the position 2 hydroxy group of 4-diphosphocytidyl-2C-methyl-D-erythritol. This chain is 4-diphosphocytidyl-2-C-methyl-D-erythritol kinase, found in Shigella boydii serotype 18 (strain CDC 3083-94 / BS512).